The primary structure comprises 59 residues: Chromatin protein Cren7 (59 aa).

Belongs to the Cren7 family. As to quaternary structure, monomer. Methylated at multiple sites, to varying extents.

The protein resides in the chromosome. It localises to the cytoplasm. A chromatin protein, binds double-stranded DNA without sequence specificity. Constrains negative DNA supercoils. This is Chromatin protein Cren7 from Pyrobaculum neutrophilum (strain DSM 2338 / JCM 9278 / NBRC 100436 / V24Sta) (Thermoproteus neutrophilus).